We begin with the raw amino-acid sequence, 393 residues long: Dual-specificity RNA methyltransferase RlmN (393 aa).

The Proton acceptor role is filled by Glu114. One can recognise a Radical SAM core domain in the interval 120-359 (EGDRATLCVS…VIVRKTRGDD (240 aa)). Residues Cys127 and Cys364 are joined by a disulfide bond. 3 residues coordinate [4Fe-4S] cluster: Cys134, Cys138, and Cys141. S-adenosyl-L-methionine-binding positions include 188 to 189 (GE), Ser220, 242 to 244 (SLH), and Asn321. Cys364 functions as the S-methylcysteine intermediate in the catalytic mechanism.

It belongs to the radical SAM superfamily. RlmN family. [4Fe-4S] cluster serves as cofactor.

The protein localises to the cytoplasm. The catalysed reaction is adenosine(2503) in 23S rRNA + 2 reduced [2Fe-2S]-[ferredoxin] + 2 S-adenosyl-L-methionine = 2-methyladenosine(2503) in 23S rRNA + 5'-deoxyadenosine + L-methionine + 2 oxidized [2Fe-2S]-[ferredoxin] + S-adenosyl-L-homocysteine. It catalyses the reaction adenosine(37) in tRNA + 2 reduced [2Fe-2S]-[ferredoxin] + 2 S-adenosyl-L-methionine = 2-methyladenosine(37) in tRNA + 5'-deoxyadenosine + L-methionine + 2 oxidized [2Fe-2S]-[ferredoxin] + S-adenosyl-L-homocysteine. Functionally, specifically methylates position 2 of adenine 2503 in 23S rRNA and position 2 of adenine 37 in tRNAs. m2A2503 modification seems to play a crucial role in the proofreading step occurring at the peptidyl transferase center and thus would serve to optimize ribosomal fidelity. The protein is Dual-specificity RNA methyltransferase RlmN of Haemophilus ducreyi (strain 35000HP / ATCC 700724).